The sequence spans 127 residues: MRPPLLLFLTVTVLVSCASAVSTGNAAELRSLRSIKTTTNDDAAEEERGGFYHKFDLNFLDDIFHGLPEQFQRMRNQPERLRTMFENWKTGWMSVDDAVAYMTREGLSEKAISQFKAAYQAYLKHKG.

The first 20 residues, 1-20 (MRPPLLLFLTVTVLVSCASA), serve as a signal peptide directing secretion. The short motif at 30–48 (RSLRSIKTTTNDDAAEEER) is the RxLR-dEER element.

It belongs to the RxLR effector family.

Its subcellular location is the secreted. The protein localises to the host cell. Secreted effector that partially suppresses elicitor-induced cell death in host and enhances virulence of P.parasitica. In Phytophthora nicotianae (Potato buckeye rot agent), this protein is Secreted RxLR effector protein 3.